The following is a 360-amino-acid chain: Olfactory receptor 1L1 (360 aa).

Over 1-75 the chain is Extracellular; sequence MERNHNPDNC…GLSSRPEDQK (75 aa). The N-linked (GlcNAc...) asparagine glycan is linked to N55. A helical transmembrane segment spans residues 76–99; sequence PLFAVFLPIYLITVIGNLLIILAI. Over 100–107 the chain is Cytoplasmic; that stretch reads RSDTRLQT. The helical transmembrane segment at 108–129 threads the bilayer; it reads PMYFFLSILSFVDICYVTVIIP. Over 130–150 the chain is Extracellular; it reads KMLVNFLSETKTISYSECLTQ. A disulfide bridge connects residues C147 and C239. A helical membrane pass occupies residues 151-170; sequence MYFFLAFGNTDSYLLAAMAI. Over 171–189 the chain is Cytoplasmic; it reads DRYVAICNPFHYITIMSHR. The helical transmembrane segment at 190–208 threads the bilayer; the sequence is CCVLLLVLSFCIPHFHSLL. Over 209 to 246 the chain is Extracellular; sequence HILLTNQLIFCASNVIHHFFCDDQPVLKLSCSSHFVKE. The chain crosses the membrane as a helical span at residues 247–269; that stretch reads ITVMTEGLAVIMTPFSCIIISYL. The Cytoplasmic segment spans residues 270-286; it reads RILITVLKIPSAAGKRK. Residues 287-309 traverse the membrane as a helical segment; that stretch reads AFSTCGSHLTVVTLFYGSISYLY. The Extracellular segment spans residues 310 to 321; the sequence is FQPLSNYTVKDQ. The N-linked (GlcNAc...) asparagine glycan is linked to N315. The chain crosses the membrane as a helical span at residues 322–341; sequence IATIIYTVLTPMLNPFIYSL. Over 342–360 the chain is Cytoplasmic; that stretch reads RNKDMKQGLAKLMHRMKCQ.

The protein belongs to the G-protein coupled receptor 1 family.

Its subcellular location is the cell membrane. Functionally, odorant receptor. This chain is Olfactory receptor 1L1 (OR1L1), found in Homo sapiens (Human).